A 276-amino-acid chain; its full sequence is Adenylyl-sulfate kinase 1, chloroplastic (276 aa).

Residues 1–38 constitute a chloroplast transit peptide; the sequence is MIAAGAKSLLGLSMASPKGIFDSNSMSNSRSVVVVRAC. The tract at residues 46-74 is disordered; it reads TLSHNKNGSIPEVKSINGHTGQKQGPLST. Residues 62–74 are compositionally biased toward polar residues; sequence NGHTGQKQGPLST. An ATP-binding site is contributed by 108-116; the sequence is GLSGSGKST. Residues aspartate 138, arginine 141, arginine 155, asparagine 158, 181-182, and glycine 231 contribute to the substrate site; that span reads IS. Residue serine 182 is the Phosphoserine intermediate of the active site.

The protein belongs to the APS kinase family. Homodimer; disulfide-linked. Interacts with APK2. Expressed in root vasculature, root tips, leaf epidermal and guard cells, pollen grains and funiculus of developing seeds.

The protein resides in the plastid. It localises to the chloroplast. It carries out the reaction adenosine 5'-phosphosulfate + ATP = 3'-phosphoadenylyl sulfate + ADP + H(+). The protein operates within sulfur metabolism; hydrogen sulfide biosynthesis; sulfite from sulfate: step 2/3. Its function is as follows. Catalyzes the synthesis of activated sulfate. Essential for plant reproduction and viability. Required for the production of glucosinolates. The polypeptide is Adenylyl-sulfate kinase 1, chloroplastic (APK1) (Arabidopsis thaliana (Mouse-ear cress)).